The chain runs to 132 residues: Small ribosomal subunit protein uS8c (132 aa).

It belongs to the universal ribosomal protein uS8 family. As to quaternary structure, part of the 30S ribosomal subunit.

It localises to the plastid. The protein resides in the chloroplast. In terms of biological role, one of the primary rRNA binding proteins, it binds directly to 16S rRNA central domain where it helps coordinate assembly of the platform of the 30S subunit. The chain is Small ribosomal subunit protein uS8c (rps8) from Pinus thunbergii (Japanese black pine).